A 243-amino-acid chain; its full sequence is 1-(5-phosphoribosyl)-5-[(5-phosphoribosylamino)methylideneamino] imidazole-4-carboxamide isomerase (243 aa).

The active-site Proton acceptor is the D8. Catalysis depends on D130, which acts as the Proton donor.

The protein belongs to the HisA/HisF family.

Its subcellular location is the cytoplasm. It catalyses the reaction 1-(5-phospho-beta-D-ribosyl)-5-[(5-phospho-beta-D-ribosylamino)methylideneamino]imidazole-4-carboxamide = 5-[(5-phospho-1-deoxy-D-ribulos-1-ylimino)methylamino]-1-(5-phospho-beta-D-ribosyl)imidazole-4-carboxamide. It participates in amino-acid biosynthesis; L-histidine biosynthesis; L-histidine from 5-phospho-alpha-D-ribose 1-diphosphate: step 4/9. This is 1-(5-phosphoribosyl)-5-[(5-phosphoribosylamino)methylideneamino] imidazole-4-carboxamide isomerase from Methylococcus capsulatus (strain ATCC 33009 / NCIMB 11132 / Bath).